The sequence spans 165 residues: Phosphopantetheine adenylyltransferase (165 aa).

S10 contacts substrate. Residues S10–F11 and H18 each bind ATP. The substrate site is built by K42, T79, and R93. ATP-binding positions include G94 to R96, E104, and V129 to T135.

The protein belongs to the bacterial CoaD family. As to quaternary structure, homohexamer. Requires Mg(2+) as cofactor.

Its subcellular location is the cytoplasm. The catalysed reaction is (R)-4'-phosphopantetheine + ATP + H(+) = 3'-dephospho-CoA + diphosphate. It functions in the pathway cofactor biosynthesis; coenzyme A biosynthesis; CoA from (R)-pantothenate: step 4/5. Its function is as follows. Reversibly transfers an adenylyl group from ATP to 4'-phosphopantetheine, yielding dephospho-CoA (dPCoA) and pyrophosphate. In Rhodopseudomonas palustris (strain HaA2), this protein is Phosphopantetheine adenylyltransferase.